Here is a 193-residue protein sequence, read N- to C-terminus: Crossover junction endodeoxyribonuclease RuvC (193 aa).

Catalysis depends on residues aspartate 7, glutamate 68, and aspartate 141. Positions 7, 68, and 141 each coordinate Mg(2+).

This sequence belongs to the RuvC family. In terms of assembly, homodimer which binds Holliday junction (HJ) DNA. The HJ becomes 2-fold symmetrical on binding to RuvC with unstacked arms; it has a different conformation from HJ DNA in complex with RuvA. In the full resolvosome a probable DNA-RuvA(4)-RuvB(12)-RuvC(2) complex forms which resolves the HJ. It depends on Mg(2+) as a cofactor.

The protein localises to the cytoplasm. It carries out the reaction Endonucleolytic cleavage at a junction such as a reciprocal single-stranded crossover between two homologous DNA duplexes (Holliday junction).. Its function is as follows. The RuvA-RuvB-RuvC complex processes Holliday junction (HJ) DNA during genetic recombination and DNA repair. Endonuclease that resolves HJ intermediates. Cleaves cruciform DNA by making single-stranded nicks across the HJ at symmetrical positions within the homologous arms, yielding a 5'-phosphate and a 3'-hydroxyl group; requires a central core of homology in the junction. The consensus cleavage sequence is 5'-(A/T)TT(C/G)-3'. Cleavage occurs on the 3'-side of the TT dinucleotide at the point of strand exchange. HJ branch migration catalyzed by RuvA-RuvB allows RuvC to scan DNA until it finds its consensus sequence, where it cleaves and resolves the cruciform DNA. This is Crossover junction endodeoxyribonuclease RuvC from Bifidobacterium adolescentis (strain ATCC 15703 / DSM 20083 / NCTC 11814 / E194a).